The sequence spans 335 residues: MTGTTLAATYGPISGADLEAELAQPRIADGDAQDAAVYERDGGARALPFASGGAPPDGDRADVRRAAGAGDASVRLTRVSKRYGERAVLADVDLSIGRGSFVSIVGRSGCGKSTLLRLVAELETPSAGTLVKRGDGGGALDTRIMYQEARLLPWKTVLQNVMLGLGRRAKDDARAVLDEVGLLARANDWPAQLSGGQRQRVALARALVHRPQLLLLDEPLGALDALTRIEMHALIERLWREHRFTALLVTHDVQEAVALADRVLLIEAGRIAFDQRVPLDRPRARASAAFAALEDRVLQRVLTGSDAAPAAPNAAGPEGASRGRAAPASGLRWAV.

In terms of domain architecture, ABC transporter spans 74-293 (VRLTRVSKRY…ARASAAFAAL (220 aa)). 106-113 (GRSGCGKS) serves as a coordination point for ATP. The interval 308–335 (APAAPNAAGPEGASRGRAAPASGLRWAV) is disordered.

This sequence belongs to the ABC transporter superfamily. Aliphatic sulfonates importer (TC 3.A.1.17.2) family. As to quaternary structure, the complex is composed of two ATP-binding proteins (SsuB), two transmembrane proteins (SsuC) and a solute-binding protein (SsuA).

Its subcellular location is the cell inner membrane. It catalyses the reaction ATP + H2O + aliphatic sulfonate-[sulfonate-binding protein]Side 1 = ADP + phosphate + aliphatic sulfonateSide 2 + [sulfonate-binding protein]Side 1.. Functionally, part of the ABC transporter complex SsuABC involved in aliphatic sulfonates import. Responsible for energy coupling to the transport system. The chain is Aliphatic sulfonates import ATP-binding protein SsuB from Burkholderia mallei (strain ATCC 23344).